The following is a 348-amino-acid chain: MQSITIRRPDDWHLHLRDGAMLEGVIADTSRTFARAIIMPNLVPPVVTSADAKAYRERILKALPDSHRFQPLMTLYLTEHTSPDDVEEGKNSGLITAVKLYPAGATTNSHGGVRDMEKAMPVLERMAKIGLPLCVHGEVTTPEVDIFDREAVFIDTVLDPLRQRLPELKVTMEHVTTSDGVDYIKAARGNLAGSITTHHLIINRNAILVGGIRPHYYCLPVAKRENHRLALRAAAVSGDPRFFLGTDSAPHVDPLKECACGCAGIYTSVNTMSCLAHVFEQEGALERLEAFVSLNGPAWYGLQPNEERITLSRQAEPVVFPARIETGAGPVTVFDPMFPLHWQVVQQA.

Zn(2+) contacts are provided by H13 and H15. Substrate-binding positions include H15 to R17 and N41. The Zn(2+) site is built by K99, H136, and H174. N6-carboxylysine is present on K99. Residue H136 participates in substrate binding. Substrate is bound at residue L219. Residue D247 participates in Zn(2+) binding. The active site involves D247. Residues H251 and A263 each coordinate substrate.

Belongs to the metallo-dependent hydrolases superfamily. DHOase family. Class II DHOase subfamily. Homodimer. The cofactor is Zn(2+).

It carries out the reaction (S)-dihydroorotate + H2O = N-carbamoyl-L-aspartate + H(+). Its pathway is pyrimidine metabolism; UMP biosynthesis via de novo pathway; (S)-dihydroorotate from bicarbonate: step 3/3. In terms of biological role, catalyzes the reversible cyclization of carbamoyl aspartate to dihydroorotate. The chain is Dihydroorotase from Rhizobium johnstonii (strain DSM 114642 / LMG 32736 / 3841) (Rhizobium leguminosarum bv. viciae).